Consider the following 177-residue polypeptide: MEDQVILVDENDTEIGVEGKMIAHRSGSLHRAISIFIFDSADRLLLQKRAASKYHSAGLWSNTCCSHPRPREECARAARRRLREEMGIACELDVKFGFVYRAVLTNHLIENEFDHVFFGRHDGDPVPNPDEAEDWKWVDLAWLRADLNERPHAYSFWLEACIDRVIACREEDRTRVA.

Residues His-24 and His-30 each contribute to the Mn(2+) site. The Nudix hydrolase domain occupies 28 to 160; the sequence is SLHRAISIFI…PHAYSFWLEA (133 aa). Cys-65 is an active-site residue. Residue Cys-65 participates in Mg(2+) binding. His-67 serves as a coordination point for Mn(2+). Glu-85 lines the Mg(2+) pocket. Mn(2+) is bound by residues Glu-110 and Glu-112. Glu-112 is an active-site residue.

The protein belongs to the IPP isomerase type 1 family. Requires Mg(2+) as cofactor. Mn(2+) is required as a cofactor.

It localises to the cytoplasm. It carries out the reaction isopentenyl diphosphate = dimethylallyl diphosphate. The protein operates within isoprenoid biosynthesis; dimethylallyl diphosphate biosynthesis; dimethylallyl diphosphate from isopentenyl diphosphate: step 1/1. Catalyzes the 1,3-allylic rearrangement of the homoallylic substrate isopentenyl (IPP) to its highly electrophilic allylic isomer, dimethylallyl diphosphate (DMAPP). This chain is Isopentenyl-diphosphate Delta-isomerase 1, found in Aromatoleum aromaticum (strain DSM 19018 / LMG 30748 / EbN1) (Azoarcus sp. (strain EbN1)).